The following is a 384-amino-acid chain: Surfeit locus protein 1-like (384 aa).

3 helical membrane passes run Ala-55–Leu-75, Ile-302–Ile-322, and Ile-338–Tyr-358.

It belongs to the SURF1 (TC 3.D.4.8) family.

It localises to the mitochondrion inner membrane. May be involved in the biogenesis of the COX complex. The sequence is that of Surfeit locus protein 1-like from Arabidopsis thaliana (Mouse-ear cress).